Consider the following 311-residue polypeptide: Ribonuclease HIII (311 aa).

Residues 95-311 form the RNase H type-2 domain; it reads MSIVGSDEVG…NTEKAFRLLK (217 aa). Positions 101, 102, and 206 each coordinate a divalent metal cation.

The protein belongs to the RNase HII family. RnhC subfamily. It depends on Mn(2+) as a cofactor. Requires Mg(2+) as cofactor.

The protein localises to the cytoplasm. The enzyme catalyses Endonucleolytic cleavage to 5'-phosphomonoester.. Its function is as follows. Endonuclease that specifically degrades the RNA of RNA-DNA hybrids. The chain is Ribonuclease HIII from Bacillus anthracis (strain A0248).